A 101-amino-acid polypeptide reads, in one-letter code: Small ribosomal subunit protein uS14 (101 aa).

This sequence belongs to the universal ribosomal protein uS14 family. As to quaternary structure, part of the 30S ribosomal subunit. Contacts proteins S3 and S10.

Binds 16S rRNA, required for the assembly of 30S particles and may also be responsible for determining the conformation of the 16S rRNA at the A site. This is Small ribosomal subunit protein uS14 from Brucella abortus (strain S19).